A 361-amino-acid chain; its full sequence is GDSL esterase/lipase At2g40250 (361 aa).

The first 28 residues, 1 to 28 (MNRNQHKPMFVTFLINILLLQLLNLTNA), serve as a signal peptide directing secretion. The active-site Nucleophile is the Ser-43. Active-site residues include Asp-337 and His-340.

The protein belongs to the 'GDSL' lipolytic enzyme family.

Its subcellular location is the secreted. The polypeptide is GDSL esterase/lipase At2g40250 (Arabidopsis thaliana (Mouse-ear cress)).